An 846-amino-acid chain; its full sequence is Leucine--tRNA ligase (846 aa).

The 'HIGH' region signature appears at 47–57 (PYPSGRIHMGH). The short motif at 621–625 (KMSKS) is the 'KMSKS' region element. Lys-624 serves as a coordination point for ATP.

The protein belongs to the class-I aminoacyl-tRNA synthetase family.

It is found in the cytoplasm. It carries out the reaction tRNA(Leu) + L-leucine + ATP = L-leucyl-tRNA(Leu) + AMP + diphosphate. In Zymomonas mobilis subsp. mobilis (strain ATCC 31821 / ZM4 / CP4), this protein is Leucine--tRNA ligase.